We begin with the raw amino-acid sequence, 89 residues long: Large ribosomal subunit protein uL24 (89 aa).

The protein belongs to the universal ribosomal protein uL24 family. Part of the 50S ribosomal subunit.

In terms of biological role, one of two assembly initiator proteins, it binds directly to the 5'-end of the 23S rRNA, where it nucleates assembly of the 50S subunit. One of the proteins that surrounds the polypeptide exit tunnel on the outside of the subunit. This Chlorobium chlorochromatii (strain CaD3) protein is Large ribosomal subunit protein uL24.